Consider the following 869-residue polypeptide: Dimethylglycine dehydrogenase, mitochondrial (869 aa).

A mitochondrion-targeting transit peptide spans 1–43; the sequence is MLRPGALRLRGLALRGSPRRPSSAGLREGQESPASPPEWKDRA. A disordered region spans residues 14-39; it reads LRGSPRRPSSAGLREGQESPASPPEW. Residues 52–53, 73–74, and 80–88 contribute to the FAD site; these read CV, EK, and GSTWHAAGL. His-84 carries the tele-8alpha-FAD histidine modification. Lys-107 is subject to N6-acetyllysine. Position 141 is an N6-acetyllysine; alternate (Lys-141). Residue Lys-141 is modified to N6-succinyllysine; alternate. Lys-161 is modified (N6-acetyllysine). Val-212 contributes to the FAD binding site. Lys-216 bears the N6-acetyllysine mark. Trp-244 is a binding site for FAD. Residues Lys-310 and Lys-312 each carry the N6-succinyllysine modification. N6-acetyllysine is present on residues Lys-328 and Lys-353. Position 390-395 (390-395) interacts with FAD; that stretch reads FGYGII. Residues Lys-427, Lys-469, and Lys-516 each carry the N6-acetyllysine; alternate modification. Lys-427, Lys-469, and Lys-516 each carry N6-succinyllysine; alternate. 573–575 provides a ligand contact to (6S)-5,6,7,8-tetrahydrofolate; sequence ELT. Lys-648 carries the N6-acetyllysine; alternate modification. An N6-succinyllysine; alternate modification is found at Lys-648. Residues Tyr-669, 676–678, and Tyr-737 contribute to the (6S)-5,6,7,8-tetrahydrofolate site; that span reads ELY. The residue at position 757 (Lys-757) is an N6-acetyllysine. Residue Lys-786 is modified to N6-acetyllysine; alternate. Lys-786 carries the post-translational modification N6-succinyllysine; alternate. At Lys-788 the chain carries N6-succinyllysine.

Belongs to the GcvT family. The cofactor is FAD.

It localises to the mitochondrion. It catalyses the reaction (6S)-5,6,7,8-tetrahydrofolyl-(gamma-L-Glu)(n) + N,N-dimethylglycine + oxidized [electron-transfer flavoprotein] + H(+) = (6R)-5,10-methylenetetrahydrofolyl-(gamma-L-Glu)(n) + sarcosine + reduced [electron-transfer flavoprotein]. It functions in the pathway amine and polyamine degradation; betaine degradation; sarcosine from betaine: step 2/2. Functionally, catalyzes the demethylation of N,N-dimethylglycine to sarcosine. Also has activity with sarcosine in vitro. This Mus musculus (Mouse) protein is Dimethylglycine dehydrogenase, mitochondrial (Dmgdh).